The following is a 199-amino-acid chain: Small ribosomal subunit protein uS5 (199 aa).

The tract at residues 1–28 is disordered; that stretch reads MARTPNTDRRQRGGDDQRNRSPRSDERD. In terms of domain architecture, S5 DRBM spans 31-94; that stretch reads FLDKLVHINR…DQAKRTMIKV (64 aa).

This sequence belongs to the universal ribosomal protein uS5 family. Part of the 30S ribosomal subunit. Contacts proteins S4 and S8.

In terms of biological role, with S4 and S12 plays an important role in translational accuracy. Its function is as follows. Located at the back of the 30S subunit body where it stabilizes the conformation of the head with respect to the body. The chain is Small ribosomal subunit protein uS5 from Rhodospirillum rubrum (strain ATCC 11170 / ATH 1.1.1 / DSM 467 / LMG 4362 / NCIMB 8255 / S1).